Reading from the N-terminus, the 73-residue chain is Translation initiation factor IF-1 (73 aa).

The S1-like domain maps to 1–73; it reads MSKKKDVIEM…TRGRITYRYK (73 aa).

This sequence belongs to the IF-1 family. Component of the 30S ribosomal translation pre-initiation complex which assembles on the 30S ribosome in the order IF-2 and IF-3, IF-1 and N-formylmethionyl-tRNA(fMet); mRNA recruitment can occur at any time during PIC assembly.

It localises to the cytoplasm. One of the essential components for the initiation of protein synthesis. Stabilizes the binding of IF-2 and IF-3 on the 30S subunit to which N-formylmethionyl-tRNA(fMet) subsequently binds. Helps modulate mRNA selection, yielding the 30S pre-initiation complex (PIC). Upon addition of the 50S ribosomal subunit IF-1, IF-2 and IF-3 are released leaving the mature 70S translation initiation complex. The protein is Translation initiation factor IF-1 of Roseiflexus castenholzii (strain DSM 13941 / HLO8).